We begin with the raw amino-acid sequence, 208 residues long: Frataxin, mitochondrial (208 aa).

The transit peptide at 1–40 directs the protein to the mitochondrion; that stretch reads MWTFGRRAAAGLLPRTASRASAWVRNPRGRERIGTCGRRG.

The protein belongs to the frataxin family. As to quaternary structure, component of the mitochondrial core iron-sulfur cluster (ISC) complex composed of NFS1, LYRM4, NDUFAB1, ISCU, FXN, and FDX2; this complex is a heterohexamer containing two copies of each monomer. Homodimer. Monomer (probable predominant form). Oligomer. Monomers and polymeric aggregates of &gt;1 MDa have been isolated from mitochondria. A small fraction of heterologous overexpressed recombinant frataxin forms high-molecular weight aggregates that incorporate iron. Interacts with LYRM4. Interacts (via ferrous form) with ISCU; the interaction is possible when both are bound to the dimeric form of the cysteine desulfurase complex (NFS1:LYRM4) and the interaction enhances FXN interaction to the dimeric form of the cysteine desulfurase complex (NFS1:LYRM4). Interacts with FECH; one iron-bound FXN monomer seems to interact with a FECH homodimer. Interacts with SDHA and SDHB. Interacts with ACO2; the interaction is dependent on citrate. Interacts with HSPA9. Interacts with ACO1. Interacts with ISCU (cytoplasmic form). In terms of processing, processed in two steps by mitochondrial processing peptidase (MPP). MPP first cleaves the precursor to intermediate form and subsequently converts the intermediate to yield frataxin mature form (frataxin(81-210)) which is the predominant form. The additional forms, frataxin(56-210) and frataxin(78-210), seem to be produced when the normal maturation process is impaired; their physiological relevance is unsure.

The protein localises to the mitochondrion. Its subcellular location is the cytoplasm. It is found in the cytosol. It carries out the reaction 4 Fe(2+) + O2 + 4 H(+) = 4 Fe(3+) + 2 H2O. Its function is as follows. Functions as an activator of persulfide transfer to the scaffoding protein ISCU as component of the core iron-sulfur cluster (ISC) assembly complex and participates to the [2Fe-2S] cluster assembly. Accelerates sulfur transfer from NFS1 persulfide intermediate to ISCU and to small thiols such as L-cysteine and glutathione leading to persulfuration of these thiols and ultimately sulfide release. Binds ferrous ion and is released from FXN upon the addition of both L-cysteine and reduced FDX2 during [2Fe-2S] cluster assembly. The core iron-sulfur cluster (ISC) assembly complex is involved in the de novo synthesis of a [2Fe-2S] cluster, the first step of the mitochondrial iron-sulfur protein biogenesis. This process is initiated by the cysteine desulfurase complex (NFS1:LYRM4:NDUFAB1) that produces persulfide which is delivered on the scaffold protein ISCU in a FXN-dependent manner. Then this complex is stabilized by FDX2 which provides reducing equivalents to accomplish the [2Fe-2S] cluster assembly. Finally, the [2Fe-2S] cluster is transferred from ISCU to chaperone proteins, including HSCB, HSPA9 and GLRX5. May play a role in the protection against iron-catalyzed oxidative stress through its ability to catalyze the oxidation of Fe(2+) to Fe(3+); the oligomeric form but not the monomeric form has in vitro ferroxidase activity. May be able to store large amounts of iron in the form of a ferrihydrite mineral by oligomerization; however, the physiological relevance is unsure as reports are conflicting and the function has only been shown using heterologous overexpression systems. May function as an iron chaperone protein that protects the aconitase [4Fe-4S]2+ cluster from disassembly and promotes enzyme reactivation. May play a role as a high affinity iron binding partner for FECH that is capable of both delivering iron to ferrochelatase and mediating the terminal step in mitochondrial heme biosynthesis. Modulates the RNA-binding activity of ACO1. May be involved in the cytoplasmic iron-sulfur protein biogenesis. May contribute to oxidative stress resistance and overall cell survival. This chain is Frataxin, mitochondrial, found in Rattus norvegicus (Rat).